A 173-amino-acid chain; its full sequence is MTDTPTENLENTEVTPFTEGDREIAYRTDSNPTVAAGDSKRPAMIAPGAATGRRKEAIARVRIIPGSGQWKINGRTLEDYFPNKVHQQIVTEPFATAGVEGAYDVIARIGGGGVTGQAGALRLGIARALNNVDPEASRPALKKAGMLTRDARVKERKKAGLKKARKAPQYSKR.

The span at 1–15 (MTDTPTENLENTEVT) shows a compositional bias: polar residues. Disordered regions lie at residues 1 to 26 (MTDTPTENLENTEVTPFTEGDREIAY) and 135 to 173 (EASRPALKKAGMLTRDARVKERKKAGLKKARKAPQYSKR). Residues 154–173 (KERKKAGLKKARKAPQYSKR) show a composition bias toward basic residues.

It belongs to the universal ribosomal protein uS9 family.

This chain is Small ribosomal subunit protein uS9, found in Cutibacterium acnes (strain DSM 16379 / KPA171202) (Propionibacterium acnes).